The primary structure comprises 475 residues: Threonine synthase (475 aa).

An N6-(pyridoxal phosphate)lysine modification is found at Lys-120.

It belongs to the threonine synthase family. Pyridoxal 5'-phosphate is required as a cofactor.

The enzyme catalyses O-phospho-L-homoserine + H2O = L-threonine + phosphate. It participates in amino-acid biosynthesis; L-threonine biosynthesis; L-threonine from L-aspartate: step 5/5. Functionally, catalyzes the gamma-elimination of phosphate from L-phosphohomoserine and the beta-addition of water to produce L-threonine. This chain is Threonine synthase (thrC), found in Methylobacillus glycogenes.